We begin with the raw amino-acid sequence, 318 residues long: Acetyl-coenzyme A carboxylase carboxyl transferase subunit alpha (318 aa).

Residues 34–295 (DIEDQISQLR…KQAIKKDLSE (262 aa)) form the CoA carboxyltransferase C-terminal domain.

It belongs to the AccA family. As to quaternary structure, acetyl-CoA carboxylase is a heterohexamer composed of biotin carboxyl carrier protein (AccB), biotin carboxylase (AccC) and two subunits each of ACCase subunit alpha (AccA) and ACCase subunit beta (AccD).

The protein localises to the cytoplasm. The catalysed reaction is N(6)-carboxybiotinyl-L-lysyl-[protein] + acetyl-CoA = N(6)-biotinyl-L-lysyl-[protein] + malonyl-CoA. Its pathway is lipid metabolism; malonyl-CoA biosynthesis; malonyl-CoA from acetyl-CoA: step 1/1. Its function is as follows. Component of the acetyl coenzyme A carboxylase (ACC) complex. First, biotin carboxylase catalyzes the carboxylation of biotin on its carrier protein (BCCP) and then the CO(2) group is transferred by the carboxyltransferase to acetyl-CoA to form malonyl-CoA. This chain is Acetyl-coenzyme A carboxylase carboxyl transferase subunit alpha, found in Colwellia psychrerythraea (strain 34H / ATCC BAA-681) (Vibrio psychroerythus).